Reading from the N-terminus, the 224-residue chain is Ribonuclease T (224 aa).

The Exonuclease domain maps to Val-32–Phe-206. 4 residues coordinate Mg(2+): Asp-35, Glu-37, His-193, and Asp-198. The Proton donor/acceptor role is filled by His-193.

Belongs to the RNase T family. As to quaternary structure, homodimer. Requires Mg(2+) as cofactor.

Functionally, trims short 3' overhangs of a variety of RNA species, leaving a one or two nucleotide 3' overhang. Responsible for the end-turnover of tRNA: specifically removes the terminal AMP residue from uncharged tRNA (tRNA-C-C-A). Also appears to be involved in tRNA biosynthesis. This chain is Ribonuclease T, found in Pseudomonas fluorescens (strain Pf0-1).